Here is a 693-residue protein sequence, read N- to C-terminus: Glycine--tRNA ligase beta subunit (693 aa).

This sequence belongs to the class-II aminoacyl-tRNA synthetase family. In terms of assembly, tetramer of two alpha and two beta subunits.

It is found in the cytoplasm. It carries out the reaction tRNA(Gly) + glycine + ATP = glycyl-tRNA(Gly) + AMP + diphosphate. In Halalkalibacterium halodurans (strain ATCC BAA-125 / DSM 18197 / FERM 7344 / JCM 9153 / C-125) (Bacillus halodurans), this protein is Glycine--tRNA ligase beta subunit (glyS).